Reading from the N-terminus, the 427-residue chain is UPF0761 membrane protein Plut_1323 (427 aa).

A run of 6 helical transmembrane segments spans residues 51–71 (LLSI…FAVF), 105–125 (TFTM…VLIS), 147–167 (FTLY…SLAA), 188–208 (LLSL…YLLV), 221–241 (GALV…FYVA), and 251–271 (GALS…VVVL).

It belongs to the UPF0761 family.

The protein localises to the cell inner membrane. In Chlorobium luteolum (strain DSM 273 / BCRC 81028 / 2530) (Pelodictyon luteolum), this protein is UPF0761 membrane protein Plut_1323.